A 558-amino-acid chain; its full sequence is Nucleoprotein (558 aa).

Residues 54-237 (MRKERRDDKD…ITEQQSSINI (184 aa)) form a binding site for the cap structure m7GTP region. The Mn(2+) site is built by aspartate 382 and glutamate 384. Residues glutamate 392, cysteine 499, histidine 502, and cysteine 518 each coordinate Zn(2+). Residue aspartate 522 participates in Mn(2+) binding.

It belongs to the arenaviridae nucleocapsid protein family. Homomultimerizes to form the nucleocapsid. Binds to viral genomic RNA. Interacts with glycoprotein G2. Interacts with protein Z; this interaction probably directs the encapsidated genome to budding sites. Interacts with protein L; this interaction does not interfere with Z-L interaction. Interacts with host IKBKE (via Protein kinase domain); the interaction inhibits IKBKE kinase activity.

It localises to the virion. It is found in the host cytoplasm. Encapsidates the genome, protecting it from nucleases. The encapsidated genomic RNA is termed the nucleocapsid (NC). Serves as template for viral transcription and replication. The increased presence of protein N in host cell does not seem to trigger the switch from transcription to replication as observed in other negative strain RNA viruses. Through the interaction with host IKBKE, strongly inhibits the phosphorylation and nuclear translocation of host IRF3, a protein involved in interferon activation pathway, leading to the inhibition of interferon-beta and IRF3-dependent promoters activation. Also encodes a functional 3'-5' exoribonuclease that degrades preferentially dsRNA substrates and thereby participates in the suppression of interferon induction. This is Nucleoprotein from Lymphocytic choriomeningitis virus (strain WE) (LCMV).